The sequence spans 459 residues: Putrescine aminotransferase (459 aa).

Pyridoxal 5'-phosphate contacts are provided by residues Gly-150–Thr-151 and Gln-274. At Lys-300 the chain carries N6-(pyridoxal phosphate)lysine. Pyridoxal 5'-phosphate is bound at residue Thr-332.

Belongs to the class-III pyridoxal-phosphate-dependent aminotransferase family. Putrescine aminotransferase subfamily. It depends on pyridoxal 5'-phosphate as a cofactor.

The enzyme catalyses an alkane-alpha,omega-diamine + 2-oxoglutarate = an omega-aminoaldehyde + L-glutamate. It carries out the reaction putrescine + 2-oxoglutarate = 1-pyrroline + L-glutamate + H2O. The catalysed reaction is cadaverine + 2-oxoglutarate = 5-aminopentanal + L-glutamate. The protein operates within amine and polyamine degradation; putrescine degradation; 4-aminobutanal from putrescine (transaminase route): step 1/1. Catalyzes the aminotransferase reaction from putrescine to 2-oxoglutarate, leading to glutamate and 4-aminobutanal, which spontaneously cyclizes to form 1-pyrroline. This is the first step in one of two pathways for putrescine degradation, where putrescine is converted into 4-aminobutanoate (gamma-aminobutyrate or GABA) via 4-aminobutanal. Also functions as a cadaverine transaminase in a a L-lysine degradation pathway to succinate that proceeds via cadaverine, glutarate and L-2-hydroxyglutarate. The sequence is that of Putrescine aminotransferase from Shigella boydii serotype 4 (strain Sb227).